The primary structure comprises 239 residues: DNA repair protein RecO (239 aa).

The protein belongs to the RecO family.

In terms of biological role, involved in DNA repair and RecF pathway recombination. The protein is DNA repair protein RecO of Cereibacter sphaeroides (strain KD131 / KCTC 12085) (Rhodobacter sphaeroides).